A 115-amino-acid polypeptide reads, in one-letter code: MARAAATQLVLVAMVAAMLIVATDAAISCGQVSSALSPCISYARGNGAKPPVACCSGVKRLAGAAQSTADKQAACKCIKSAAGGLNAGKAAGIPSMCGVSVPYAISASVDCSKIR.

A signal peptide spans 1–25; sequence MARAAATQLVLVAMVAAMLIVATDA. Disulfide bonds link Cys29/Cys77, Cys39/Cys54, Cys55/Cys97, and Cys75/Cys111.

The protein belongs to the plant LTP family.

Plant non-specific lipid-transfer proteins transfer phospholipids as well as galactolipids across membranes. May play a role in wax or cutin deposition in the cell walls of expanding epidermal cells and certain secretory tissues. The protein is Non-specific lipid-transfer protein 4.2 (LTP4.2) of Hordeum vulgare (Barley).